A 299-amino-acid chain; its full sequence is Elongation factor Ts (299 aa).

The interval 81-84 (TDFV) is involved in Mg(2+) ion dislocation from EF-Tu.

It belongs to the EF-Ts family.

It is found in the cytoplasm. In terms of biological role, associates with the EF-Tu.GDP complex and induces the exchange of GDP to GTP. It remains bound to the aminoacyl-tRNA.EF-Tu.GTP complex up to the GTP hydrolysis stage on the ribosome. The protein is Elongation factor Ts of Halothermothrix orenii (strain H 168 / OCM 544 / DSM 9562).